The chain runs to 52 residues: Small ribosomal subunit protein uS14 (52 aa).

Residues C17, C20, C35, and C38 each contribute to the Zn(2+) site.

This sequence belongs to the universal ribosomal protein uS14 family. Zinc-binding uS14 subfamily. In terms of assembly, part of the 30S ribosomal subunit. The cofactor is Zn(2+).

Binds 16S rRNA, required for the assembly of 30S particles. This Halobacterium salinarum (strain ATCC 700922 / JCM 11081 / NRC-1) (Halobacterium halobium) protein is Small ribosomal subunit protein uS14.